Consider the following 344-residue polypeptide: L-rhamnose-proton symporter (344 aa).

10 helical membrane passes run 4-24, 38-58, 68-88, 101-121, 137-157, 175-195, 214-234, 259-279, 290-310, and 323-343; these read AITMGIFWHLIGAASAACFYA, WSIGGIVSWLILPWTISALLL, FNLSTLLPVFLFGAMWGIGNI, MGIGIAIGITLIVGTLMTPII, TLLGVLVALIGVGIVTRAGQL, LLLAVMCGIFSAGMSFAMNAA, LPSYVVIMGGGALINLGFCFV, ILLSALGGLMWYLQFFFYAWG, ISWMLHMSFYVLCGGIVGLVL, and VLSLGCVVIIIAANIVGMGMA.

It belongs to the L-rhamnose transporter (TC 2.A.7.6) family.

The protein resides in the cell inner membrane. The enzyme catalyses L-rhamnopyranose(in) + H(+)(in) = L-rhamnopyranose(out) + H(+)(out). Uptake of L-rhamnose across the cytoplasmic membrane with the concomitant transport of protons into the cell (symport system). This is L-rhamnose-proton symporter from Citrobacter koseri (strain ATCC BAA-895 / CDC 4225-83 / SGSC4696).